Consider the following 1270-residue polypeptide: MSSNTENQRVNFASIKNPMKYPDFLEVQLKSFQDFLQLDTPPEKRKNDGLYKVFAENFPIADTRNNFVLEFLDYYIDPPHYSIDECLERGLTYSVPLKAKLKLYCTDPDHEDFDTVIQDVYLGPIPYMTPKGTFVINGAERVVVSQLHRSPGVFFGQSVHANGTKLYSARIIPFKGSWIEFATDINNVMYAYIDRKKKLPVTTLLRAVGFENDKDILEIFNLAEDVKVNKTNLKKVVGRKLAARVLKTWTEDFVDEDTGEVVSIERNEVIIDRETVIEEDHIDEIIDSGVQNILVHKEEANSSDYSIIFNTLQKDPSNSEKEAVLYIYRQLRNADPADDASAREVINNLFFSEKRYDLGEVGRYRINKKLGLTTDMDVKVLTKQDIIEIIKYLIELINSKADVDDIDHLSNRRVRTVGEQLSNQFAIGLARMSRTIRERMNVRDNEVFTPIDLINAKTISSVINSFFGTNALSQFMDQTNPLAEITHKRRLSALGPGGLSRERAGFEVRDVHYTHYGRLCPIETPEGPNIGLISSLCVYAKINELGFISTPYRKVADGKVDISDEGIEYLTAEEEEDKIIAQGNAPLDDEGKFVREKVKARRDADYPVVTPDQVELMDVSPQQIASIAASLIPFLEHDDANRALMGSNMMRQAVPLLRTEAPIVGTGIEKQLVEDSRTQIAAEGDGVVEYVDATTIRILYDRNEDEEFVSFEPALKEYRIPKFRKTNQSMTIDLRPTCDKGQRVKKGDILTEGYSTQGGELALGKNLLVAYMPWKGYNYEDAIVLNERVVREDLLTSVHVDEYILEVRETKRGMEELTSDIPNVSEEATKDLDENGIVRVGARIEPGDILIGKITPKGESDPSPEEKLLRAIFGDKAGDVKDASLKASPSLRGVVIDKKLFSRVIKSRSEKNADKAILPKLNDEFEEKAAKLKDILIEKLLVLTNGKVSQGVKDYLGTEVIAKGAKFTKRDLESLDYTIIQLSKWTADAHKNDMIRDLVMNYLKKYKELDAELKRKKFAITIGDELPAGIIQMAKVYIAKKRKIGVGDKMAGRHGNKGIVSRVVRQEDMPFLADGTPVDIVLNPLGVPSRMNIGQIFEAVLGRAGKELGVKFATPIFDGASMDDLNEWTDKAGLPRYCKTYLCDGGTGERFDQPATVGVTYMLKLGHMVEDKMHARSIGPYSLITQQPLGGKAQFGGQRFGEMEVWALEAFGAAHILQEILTIKSDDVVGRSKAYEAIVKGEPMPTPGIPESLNVLLHELRGLGLSINLE.

It belongs to the RNA polymerase beta chain family. The RNAP catalytic core consists of 2 alpha, 1 beta, 1 beta' and 1 omega subunit. When a sigma factor is associated with the core the holoenzyme is formed, which can initiate transcription.

The enzyme catalyses RNA(n) + a ribonucleoside 5'-triphosphate = RNA(n+1) + diphosphate. DNA-dependent RNA polymerase catalyzes the transcription of DNA into RNA using the four ribonucleoside triphosphates as substrates. The chain is DNA-directed RNA polymerase subunit beta from Phocaeicola vulgatus (strain ATCC 8482 / DSM 1447 / JCM 5826 / CCUG 4940 / NBRC 14291 / NCTC 11154) (Bacteroides vulgatus).